The chain runs to 199 residues: MSLVPMVVEQTSRGERSYDIFSRLLKERIIMLSGEVNDDSSNLIVSQLLFLESEDPDKDISIYINSPGGSITAGMAIYDTMQYIKPDVSTICVGMAASMGAFLLSSGAKGKRYALPNAEIMIHQPLGGFQGQATDIQIHANRILKIKESLNKILSENTNQPLEVIEADVERDNFMTADEAKAYGLVDKVITKNGTGKDK.

The Nucleophile role is filled by Ser98. His123 is a catalytic residue.

Belongs to the peptidase S14 family. Fourteen ClpP subunits assemble into 2 heptameric rings which stack back to back to give a disk-like structure with a central cavity, resembling the structure of eukaryotic proteasomes.

It is found in the cytoplasm. It carries out the reaction Hydrolysis of proteins to small peptides in the presence of ATP and magnesium. alpha-casein is the usual test substrate. In the absence of ATP, only oligopeptides shorter than five residues are hydrolyzed (such as succinyl-Leu-Tyr-|-NHMec, and Leu-Tyr-Leu-|-Tyr-Trp, in which cleavage of the -Tyr-|-Leu- and -Tyr-|-Trp bonds also occurs).. Cleaves peptides in various proteins in a process that requires ATP hydrolysis. Has a chymotrypsin-like activity. Plays a major role in the degradation of misfolded proteins. The sequence is that of ATP-dependent Clp protease proteolytic subunit from Clostridium botulinum (strain Alaska E43 / Type E3).